Reading from the N-terminus, the 242-residue chain is Tyrosine recombinase XerD-like (242 aa).

Residues 1-71 (MKEAIDQFIQ…AVNQFLYFLY (71 aa)) form the Core-binding (CB) domain. A Tyr recombinase domain is found at 90-242 (ENSSQGSLLD…KSITTLEKYR (153 aa)). Catalysis depends on residues lysine 148 and arginine 209. The active-site O-(3'-phospho-DNA)-tyrosine intermediate is the tyrosine 241.

Belongs to the 'phage' integrase family. XerD-like subfamily.

The protein resides in the cytoplasm. Functionally, putative tyrosine recombinase. Not involved in the cutting and rejoining of the recombining DNA molecules on dif(SL) site. This Streptococcus gordonii (strain Challis / ATCC 35105 / BCRC 15272 / CH1 / DL1 / V288) protein is Tyrosine recombinase XerD-like.